A 118-amino-acid chain; its full sequence is Large ribosomal subunit protein bL20 (118 aa).

The protein belongs to the bacterial ribosomal protein bL20 family. Part of the 50S ribosomal subunit. Contacts proteins L13 and L21.

In terms of biological role, binds directly to 23S rRNA, probably serving to organize its structure. This chain is Large ribosomal subunit protein bL20 (rplT), found in Deinococcus radiodurans (strain ATCC 13939 / DSM 20539 / JCM 16871 / CCUG 27074 / LMG 4051 / NBRC 15346 / NCIMB 9279 / VKM B-1422 / R1).